Consider the following 129-residue polypeptide: MKNLGIGTGRRKTAVARVCIRMGNGNVTVNRRDVGAYFPTAEQLRRVREPLFATANERRYDVIVNVYGGGLDGQAGACAHGIARALVRADASNQASLRAGGLLTRDSRMVERKKYGQRGARRRFQFSKR.

This sequence belongs to the universal ribosomal protein uS9 family.

In Treponema pallidum (strain Nichols), this protein is Small ribosomal subunit protein uS9 (rpsI).